A 118-amino-acid chain; its full sequence is NADH-ubiquinone oxidoreductase chain 3 (118 aa).

Helical transmembrane passes span 6-26 (IFVY…VSFL), 62-82 (LVSI…PWAV), and 87-107 (IGLF…IGFV).

This sequence belongs to the complex I subunit 3 family.

The protein resides in the mitochondrion membrane. The catalysed reaction is a ubiquinone + NADH + 5 H(+)(in) = a ubiquinol + NAD(+) + 4 H(+)(out). Functionally, core subunit of the mitochondrial membrane respiratory chain NADH dehydrogenase (Complex I) that is believed to belong to the minimal assembly required for catalysis. Complex I functions in the transfer of electrons from NADH to the respiratory chain. The immediate electron acceptor for the enzyme is believed to be ubiquinone. The chain is NADH-ubiquinone oxidoreductase chain 3 (ND3) from Marchantia polymorpha (Common liverwort).